The sequence spans 101 residues: Iron-sulfur cluster assembly protein CyaY (101 aa).

It belongs to the frataxin family.

Involved in iron-sulfur (Fe-S) cluster assembly. May act as a regulator of Fe-S biogenesis. The protein is Iron-sulfur cluster assembly protein CyaY of Actinobacillus pleuropneumoniae serotype 5b (strain L20).